Reading from the N-terminus, the 142-residue chain is Small ribosomal subunit protein uS11c (142 aa).

Belongs to the universal ribosomal protein uS11 family. In terms of assembly, part of the 30S ribosomal subunit.

The protein localises to the plastid. The protein resides in the chloroplast. The protein is Small ribosomal subunit protein uS11c of Welwitschia mirabilis (Tree tumbo).